The following is a 101-amino-acid chain: MKLTPREQEKLLIVVAADLARRRKERGLKLNYPEAVALITYELLEGARDGRTVAELMQYGATILTRDDVMEGVADMIDEIQVEATFPDGTKLVTVHQPIRS.

Belongs to the urease gamma subunit family. As to quaternary structure, heterotrimer of UreA (gamma), UreB (beta) and UreC (alpha) subunits. Three heterotrimers associate to form the active enzyme.

The protein resides in the cytoplasm. It carries out the reaction urea + 2 H2O + H(+) = hydrogencarbonate + 2 NH4(+). The protein operates within nitrogen metabolism; urea degradation; CO(2) and NH(3) from urea (urease route): step 1/1. The polypeptide is Urease subunit gamma (Geobacillus kaustophilus (strain HTA426)).